Here is a 154-residue protein sequence, read N- to C-terminus: Interleukin-2 (154 aa).

The signal sequence occupies residues Met-1–Ser-20. Thr-23 carries an O-linked (GalNAc...) threonine glycan. A disulfide bridge connects residues Cys-78 and Cys-126. N-linked (GlcNAc...) asparagine glycosylation is present at Asn-111.

Belongs to the IL-2 family.

It localises to the secreted. In terms of biological role, cytokine produced by activated CD4-positive helper T-cells and to a lesser extend activated CD8-positive T-cells and natural killer (NK) cells that plays pivotal roles in the immune response and tolerance. Binds to a receptor complex composed of either the high-affinity trimeric IL-2R (IL2RA/CD25, IL2RB/CD122 and IL2RG/CD132) or the low-affinity dimeric IL-2R (IL2RB and IL2RG). Interaction with the receptor leads to oligomerization and conformation changes in the IL-2R subunits resulting in downstream signaling starting with phosphorylation of JAK1 and JAK3. In turn, JAK1 and JAK3 phosphorylate the receptor to form a docking site leading to the phosphorylation of several substrates including STAT5. This process leads to activation of several pathways including STAT, phosphoinositide-3-kinase/PI3K and mitogen-activated protein kinase/MAPK pathways. Functions as a T-cell growth factor and can increase NK-cell cytolytic activity as well. Promotes strong proliferation of activated B-cells and subsequently immunoglobulin production. Plays a pivotal role in regulating the adaptive immune system by controlling the survival and proliferation of regulatory T-cells, which are required for the maintenance of immune tolerance. Moreover, participates in the differentiation and homeostasis of effector T-cell subsets, including Th1, Th2, Th17 as well as memory CD8-positive T-cells. This Camelus bactrianus (Bactrian camel) protein is Interleukin-2 (IL2).